Here is a 260-residue protein sequence, read N- to C-terminus: Snake venom serine protease homolog KN4 (260 aa).

Residues 1 to 18 (MVLIRVLANLLILQLSYA) form the signal peptide. A propeptide spanning residues 19–24 (QKSSEL) is cleaved from the precursor. Residues 25-251 (IIGGDECNIN…HLDWIQNIIA (227 aa)) enclose the Peptidase S1 domain. 6 cysteine pairs are disulfide-bonded: Cys-31/Cys-165, Cys-52/Cys-68, Cys-100/Cys-258, Cys-144/Cys-212, Cys-176/Cys-191, and Cys-202/Cys-227. Asn-83, Asn-123, Asn-124, Asn-156, and Asn-172 each carry an N-linked (GlcNAc...) asparagine glycan. Asn-253 carries an N-linked (GlcNAc...) asparagine glycan.

This sequence belongs to the peptidase S1 family. Snake venom subfamily. As to expression, expressed by the venom gland.

Its subcellular location is the secreted. In terms of biological role, snake venom serine protease homolog that may act in the hemostasis system of the prey. This chain is Snake venom serine protease homolog KN4, found in Trimeresurus stejnegeri (Chinese green tree viper).